A 188-amino-acid polypeptide reads, in one-letter code: Peptidyl-tRNA hydrolase (188 aa).

Tyr14 provides a ligand contact to tRNA. His19 functions as the Proton acceptor in the catalytic mechanism. Phe64, Asn66, and Asn112 together coordinate tRNA.

The protein belongs to the PTH family. As to quaternary structure, monomer.

It is found in the cytoplasm. It carries out the reaction an N-acyl-L-alpha-aminoacyl-tRNA + H2O = an N-acyl-L-amino acid + a tRNA + H(+). Hydrolyzes ribosome-free peptidyl-tRNAs (with 1 or more amino acids incorporated), which drop off the ribosome during protein synthesis, or as a result of ribosome stalling. In terms of biological role, catalyzes the release of premature peptidyl moieties from peptidyl-tRNA molecules trapped in stalled 50S ribosomal subunits, and thus maintains levels of free tRNAs and 50S ribosomes. The chain is Peptidyl-tRNA hydrolase from Enterococcus faecalis (strain ATCC 700802 / V583).